The chain runs to 311 residues: tRNA-cytidine(32) 2-sulfurtransferase (311 aa).

Positions 47-52 (SGGKDS) match the PP-loop motif motif. Residues Cys122, Cys125, and Cys213 each contribute to the [4Fe-4S] cluster site.

This sequence belongs to the TtcA family. In terms of assembly, homodimer. Mg(2+) serves as cofactor. It depends on [4Fe-4S] cluster as a cofactor.

The protein localises to the cytoplasm. The enzyme catalyses cytidine(32) in tRNA + S-sulfanyl-L-cysteinyl-[cysteine desulfurase] + AH2 + ATP = 2-thiocytidine(32) in tRNA + L-cysteinyl-[cysteine desulfurase] + A + AMP + diphosphate + H(+). It participates in tRNA modification. Catalyzes the ATP-dependent 2-thiolation of cytidine in position 32 of tRNA, to form 2-thiocytidine (s(2)C32). The sulfur atoms are provided by the cysteine/cysteine desulfurase (IscS) system. The protein is tRNA-cytidine(32) 2-sulfurtransferase of Shigella boydii serotype 18 (strain CDC 3083-94 / BS512).